A 112-amino-acid chain; its full sequence is Phosphoribosyl-ATP pyrophosphatase (112 aa).

This sequence belongs to the PRA-PH family.

It is found in the cytoplasm. The catalysed reaction is 1-(5-phospho-beta-D-ribosyl)-ATP + H2O = 1-(5-phospho-beta-D-ribosyl)-5'-AMP + diphosphate + H(+). It participates in amino-acid biosynthesis; L-histidine biosynthesis; L-histidine from 5-phospho-alpha-D-ribose 1-diphosphate: step 2/9. The chain is Phosphoribosyl-ATP pyrophosphatase from Chromohalobacter salexigens (strain ATCC BAA-138 / DSM 3043 / CIP 106854 / NCIMB 13768 / 1H11).